The primary structure comprises 362 residues: Very-long-chain (3R)-3-hydroxyacyl-CoA dehydratase (362 aa).

At 1-149 the chain is on the cytoplasmic side; that stretch reads MADCSLRPHV…DPFKHLKKGY (149 aa). Residues 5-94 enclose the CS domain; the sequence is SLRPHVHWAQ…KESSWWERLT (90 aa). A coiled-coil region spans residues 111–135; it reads LDESDAEMELKEKEEEKINKMKIES. The chain crosses the membrane as a helical span at residues 150 to 170; it reads LIMYNLVQFLGFSWIFVNMTV. The Lumenal portion of the chain corresponds to 171–189; the sequence is RLFILGKDSFYDTFHTIAD. The chain crosses the membrane as a helical span at residues 190 to 210; the sequence is MMYFCQTLALMEILNSLIGLV. Residues 211–212 are Cytoplasmic-facing; sequence RS. The chain crosses the membrane as a helical span at residues 213–233; that stretch reads PLIPAVIQVFGRNFILFVVLG. At 234–242 the chain is on the lumenal side; the sequence is SLEEMQSKA. The helical transmembrane segment at 243 to 263 threads the bilayer; it reads VVFFLFYFWSIIELFRYPYYM. At 264–282 the chain is on the cytoplasmic side; the sequence is LSCMGIEWKPLTWLRYTSW. A helical membrane pass occupies residues 283 to 303; the sequence is IPLYPLGGLAEAVCLIQSIPI. Catalysis depends on residues Tyr286 and Glu293. At 304–319 the chain is on the lumenal side; sequence FSETGKFSLGLPNPLN. A helical membrane pass occupies residues 320-340; sequence VTIQFSFLLQMYLIALFLGLF. The Cytoplasmic portion of the chain corresponds to 341 to 362; that stretch reads VNFRYLYKQRKQHLGPKKRKMK.

It belongs to the very long-chain fatty acids dehydratase HACD family.

Its subcellular location is the endoplasmic reticulum membrane. It carries out the reaction a very-long-chain (3R)-3-hydroxyacyl-CoA = a very-long-chain (2E)-enoyl-CoA + H2O. It catalyses the reaction (3R)-hydroxyhexadecanoyl-CoA = (2E)-hexadecenoyl-CoA + H2O. The protein operates within lipid metabolism; fatty acid biosynthesis. Catalyzes the third of the four reactions of the long-chain fatty acids elongation cycle. This endoplasmic reticulum-bound enzymatic process, allows the addition of two carbons to the chain of long- and very long-chain fatty acids/VLCFAs per cycle. This enzyme catalyzes the dehydration of the 3-hydroxyacyl-CoA intermediate into trans-2,3-enoyl-CoA, within each cycle of fatty acid elongation. Thereby, it participates in the production of VLCFAs of different chain lengths that are involved in multiple biological processes as precursors of membrane lipids and lipid mediators. Involved in Rac1-signaling pathways leading to the modulation of gene expression. The chain is Very-long-chain (3R)-3-hydroxyacyl-CoA dehydratase from Gallus gallus (Chicken).